The chain runs to 544 residues: Chaperonin GroEL (544 aa).

ATP is bound by residues 30–33, Lys51, 87–91, Gly415, 479–481, and Asp495; these read TLGP, DGTTT, and NAA.

It belongs to the chaperonin (HSP60) family. Forms a cylinder of 14 subunits composed of two heptameric rings stacked back-to-back. Interacts with the co-chaperonin GroES.

The protein resides in the cytoplasm. It catalyses the reaction ATP + H2O + a folded polypeptide = ADP + phosphate + an unfolded polypeptide.. In terms of biological role, together with its co-chaperonin GroES, plays an essential role in assisting protein folding. The GroEL-GroES system forms a nano-cage that allows encapsulation of the non-native substrate proteins and provides a physical environment optimized to promote and accelerate protein folding. The polypeptide is Chaperonin GroEL (Acinetobacter baylyi (strain ATCC 33305 / BD413 / ADP1)).